The primary structure comprises 1412 residues: DNA-directed RNA polymerase subunit beta' (1412 aa).

Positions 70, 72, 85, and 88 each coordinate Zn(2+). 3 residues coordinate Mg(2+): aspartate 460, aspartate 462, and aspartate 464. Zn(2+)-binding residues include cysteine 819, cysteine 893, cysteine 900, and cysteine 903. Positions 1392-1412 (EEAFEFGTPSTPAEEPQHPAE) are disordered.

Belongs to the RNA polymerase beta' chain family. In terms of assembly, the RNAP catalytic core consists of 2 alpha, 1 beta, 1 beta' and 1 omega subunit. When a sigma factor is associated with the core the holoenzyme is formed, which can initiate transcription. Requires Mg(2+) as cofactor. It depends on Zn(2+) as a cofactor.

It carries out the reaction RNA(n) + a ribonucleoside 5'-triphosphate = RNA(n+1) + diphosphate. In terms of biological role, DNA-dependent RNA polymerase catalyzes the transcription of DNA into RNA using the four ribonucleoside triphosphates as substrates. This Burkholderia thailandensis (strain ATCC 700388 / DSM 13276 / CCUG 48851 / CIP 106301 / E264) protein is DNA-directed RNA polymerase subunit beta'.